A 154-amino-acid polypeptide reads, in one-letter code: Superoxide dismutase [Cu-Zn] 1 (154 aa).

Cu cation contacts are provided by H47, H49, and H64. The cysteines at positions 58 and 147 are disulfide-linked. Zn(2+) contacts are provided by H64, H72, H81, and D84. Position 121 (H121) interacts with Cu cation. Position 144 (R144) interacts with substrate.

The protein belongs to the Cu-Zn superoxide dismutase family. Homodimer. Cu cation serves as cofactor. Requires Zn(2+) as cofactor.

It localises to the cytoplasm. The catalysed reaction is 2 superoxide + 2 H(+) = H2O2 + O2. In terms of biological role, destroys radicals which are normally produced within the cells and which are toxic to biological systems. The sequence is that of Superoxide dismutase [Cu-Zn] 1 (SOD1) from Debaryomyces hansenii (strain ATCC 36239 / CBS 767 / BCRC 21394 / JCM 1990 / NBRC 0083 / IGC 2968) (Yeast).